A 308-amino-acid chain; its full sequence is Serpentine receptor class V-1 (308 aa).

A run of 7 helical transmembrane segments spans residues 15 to 35, 46 to 68, 88 to 108, 135 to 155, 184 to 204, 222 to 242, and 256 to 276; these read VSTA…YILF, PFFR…STFF, VVPI…IIFI, LLLI…STDF, AMVD…AIFI, LALS…CSLL, and TMWF…LLAL.

The protein belongs to the nematode receptor-like protein srv family.

Its subcellular location is the membrane. The chain is Serpentine receptor class V-1 (srv-1) from Caenorhabditis elegans.